Reading from the N-terminus, the 514-residue chain is Extracellular exo-inulinase inuE (514 aa).

A signal peptide spans 1 to 18; the sequence is MRAFLALIFLTFVMNVES. Substrate is bound by residues 33-34 and Gln-52; that span reads ND. Asp-34 (nucleophile) is an active-site residue. A glycan (N-linked (GlcNAc...) asparagine) is linked at Asn-56. Positions 60 and 95 each coordinate substrate. Residues Asn-104 and Asn-110 are each glycosylated (N-linked (GlcNAc...) asparagine). A substrate-binding site is contributed by 162 to 163; the sequence is RD. N-linked (GlcNAc...) asparagine glycosylation is found at Asn-197 and Asn-203. Glu-214 and Trp-300 together coordinate substrate. Glu-214 serves as the catalytic Proton donor/acceptor. Residues Asn-357, Asn-371, Asn-389, and Asn-422 are each glycosylated (N-linked (GlcNAc...) asparagine).

Belongs to the glycosyl hydrolase 32 family.

The protein resides in the secreted. It carries out the reaction Hydrolysis of terminal, non-reducing (2-&gt;1)- and (2-&gt;6)-linked beta-D-fructofuranose residues in fructans.. In terms of biological role, exo-inulinase involved in utilization of the plant storage polymer inulin, consisting of fructooligosaccharides with a degree of polymerization (DP) value from 2 to 60. Splits off terminal fructose units successively from the non-reducing end of the inulin molecule. This is Extracellular exo-inulinase inuE from Meyerozyma guilliermondii (Yeast).